The primary structure comprises 150 residues: Deoxyuridine 5'-triphosphate nucleotidohydrolase (150 aa).

Residues 69–71 (RSG), asparagine 82, 86–88 (LID), and lysine 96 each bind substrate.

The protein belongs to the dUTPase family. The cofactor is Mg(2+).

The catalysed reaction is dUTP + H2O = dUMP + diphosphate + H(+). Its pathway is pyrimidine metabolism; dUMP biosynthesis; dUMP from dCTP (dUTP route): step 2/2. Functionally, this enzyme is involved in nucleotide metabolism: it produces dUMP, the immediate precursor of thymidine nucleotides and it decreases the intracellular concentration of dUTP so that uracil cannot be incorporated into DNA. The sequence is that of Deoxyuridine 5'-triphosphate nucleotidohydrolase from Neisseria gonorrhoeae (strain NCCP11945).